The chain runs to 308 residues: Serine/threonine-protein phosphatase PP1 (308 aa).

Mn(2+)-binding residues include D64, H66, D92, and N124. The Proton donor role is filled by H125. Positions 173 and 248 each coordinate Mn(2+).

This sequence belongs to the PPP phosphatase family. PP-1 subfamily. Mn(2+) serves as cofactor.

Its subcellular location is the cytoplasm. The catalysed reaction is O-phospho-L-seryl-[protein] + H2O = L-seryl-[protein] + phosphate. It catalyses the reaction O-phospho-L-threonyl-[protein] + H2O = L-threonyl-[protein] + phosphate. In Neurospora crassa (strain ATCC 24698 / 74-OR23-1A / CBS 708.71 / DSM 1257 / FGSC 987), this protein is Serine/threonine-protein phosphatase PP1 (pph-3).